Here is a 919-residue protein sequence, read N- to C-terminus: Valine--tRNA ligase (919 aa).

Residues 66 to 76 carry the 'HIGH' region motif; that stretch reads PNVTGQLHMGH. A 'KMSKS' region motif is present at residues 562–566; it reads KMSKS. Position 565 (Lys565) interacts with ATP. Positions 852–919 form a coiled coil; sequence TVDKEAERKR…RISARLEELK (68 aa).

The protein belongs to the class-I aminoacyl-tRNA synthetase family. ValS type 1 subfamily. As to quaternary structure, monomer.

The protein resides in the cytoplasm. The catalysed reaction is tRNA(Val) + L-valine + ATP = L-valyl-tRNA(Val) + AMP + diphosphate. In terms of biological role, catalyzes the attachment of valine to tRNA(Val). As ValRS can inadvertently accommodate and process structurally similar amino acids such as threonine, to avoid such errors, it has a 'posttransfer' editing activity that hydrolyzes mischarged Thr-tRNA(Val) in a tRNA-dependent manner. This is Valine--tRNA ligase from Corynebacterium diphtheriae (strain ATCC 700971 / NCTC 13129 / Biotype gravis).